Reading from the N-terminus, the 234-residue chain is Glucosamine-6-phosphate deaminase (234 aa).

The Proton acceptor; for enolization step role is filled by aspartate 62. Residue asparagine 128 is the For ring-opening step of the active site. The active-site Proton acceptor; for ring-opening step is histidine 130. The For ring-opening step role is filled by glutamate 135.

The protein belongs to the glucosamine/galactosamine-6-phosphate isomerase family. NagB subfamily.

It catalyses the reaction alpha-D-glucosamine 6-phosphate + H2O = beta-D-fructose 6-phosphate + NH4(+). Its pathway is amino-sugar metabolism; N-acetylneuraminate degradation; D-fructose 6-phosphate from N-acetylneuraminate: step 5/5. In terms of biological role, catalyzes the reversible isomerization-deamination of glucosamine 6-phosphate (GlcN6P) to form fructose 6-phosphate (Fru6P) and ammonium ion. This is Glucosamine-6-phosphate deaminase from Streptococcus pyogenes serotype M18 (strain MGAS8232).